Consider the following 1014-residue polypeptide: Collagen alpha-1(I) chain (1014 aa).

Positions 1 to 1014 (SYGYDEKGGI…PGPPGPPGPP (1014 aa)) are disordered. Positions 9–22 (GISVPGPMGPSGPR) are enriched in low complexity. Residues proline 25, proline 28, proline 30, proline 39, proline 42, proline 45, proline 60, proline 75, proline 81, proline 90, and proline 96 each carry the 4-hydroxyproline modification. Over residues 33 to 51 (QGFQGPPGEPGEPGSSGPM) the composition is skewed to low complexity. A compositionally biased stretch (basic and acidic residues) spans 63–77 (NGDDGEAGKPGRPGE). Residue lysine 99 is modified to 5-hydroxylysine; alternate. O-linked (Gal...) hydroxylysine; alternate glycosylation occurs at lysine 99. Serine 105 is subject to Phosphoserine. The span at 113-129 (DAGPAGPKGEPGSPGEN) shows a compositional bias: low complexity. 4-hydroxyproline is present on residues proline 123, proline 126, proline 132, proline 141, proline 147, proline 168, proline 177, proline 180, proline 207, proline 210, proline 222, proline 228, proline 237, proline 243, proline 246, and proline 261. The span at 147–165 (PGASGPAGARGNDGATGAA) shows a compositional bias: low complexity. Over residues 167–179 (PPGPTGPAGPPGF) the composition is skewed to pro residues. The segment covering 213-252 (AGAAGPAGNPGADGQPGAKGANGAPGIAGAPGFPGARGPS) has biased composition (low complexity). Position 264 is a 5-hydroxylysine (lysine 264). 4-hydroxyproline occurs at positions 270, 273, 285, 294, 309, 315, 324, and 330. Positions 319-328 (GERGGPGSRG) are enriched in gly residues. Lysine 339 carries the post-translational modification 5-hydroxylysine. 4-hydroxyproline is present on residues proline 348, proline 357, proline 363, proline 369, proline 378, proline 381, proline 390, proline 399, proline 405, proline 417, proline 426, proline 435, proline 438, proline 456, proline 473, proline 479, proline 485, proline 491, proline 497, proline 503, proline 515, proline 524, proline 535, proline 548, proline 554, and proline 563. Residues 372 to 398 (KGLTGSPGSPGPDGKTGPPGPAGQDGR) are compositionally biased toward low complexity. The segment covering 407–426 (ARGQAGVMGFPGPKGAAGEP) has biased composition (low complexity). The span at 485 to 494 (PGEAGKPGEQ) shows a compositional bias: low complexity. 5-hydroxylysine is present on lysine 575. 4-hydroxyproline occurs at positions 581, 596, and 602. The segment covering 608–622 (SGPSGPAGPTGARGA) has biased composition (low complexity). A Phosphoserine modification is found at serine 611. Proline 623, proline 629, proline 632, proline 641, proline 647, proline 674, and proline 683 each carry 4-hydroxyproline. Positions 635–665 (AGFAGPPGADGQPGAKGEPGDAGAKGDAGPS) are enriched in low complexity. The residue at position 686 (lysine 686) is a 5-hydroxylysine. The segment covering 691 to 707 (SAGPPGATGFPGAAGRV) has biased composition (low complexity). 2 positions are modified to 4-hydroxyproline: proline 695 and proline 701. Residue proline 709 is modified to 3-hydroxyproline. 4-hydroxyproline is present on residues proline 710, proline 719, proline 722, proline 743, proline 752, proline 760, proline 769, proline 787, proline 796, proline 799, proline 805, proline 820, proline 826, proline 832, proline 841, and proline 847. Residues 736–745 (ETGPAGRPGE) show a composition bias toward low complexity. Residues 757-769 (KGSPGADGPAGAP) show a composition bias toward low complexity. Pro residues predominate over residues 819-829 (PPGPVGPPGLA). Position 856 is a 5-hydroxylysine (lysine 856). Over residues 864-879 (PGPPGAPGAPGAPGPV) the composition is skewed to pro residues. 4-hydroxyproline is present on residues proline 867, proline 870, and proline 873. Residues 900–914 (AGPAGARGPAGPQGP) are compositionally biased toward low complexity. Residues 915–929 (RGDKGETGEQGDRGI) are compositionally biased toward basic and acidic residues. Lysine 918 carries the post-translational modification 5-hydroxylysine. Residue lysine 930 is modified to 5-hydroxylysine; alternate. A glycan (O-linked (Gal...) hydroxylysine; alternate) is linked at lysine 930. 4 positions are modified to 4-hydroxyproline: proline 945, proline 948, proline 966, and proline 981. Residues 948-981 (PGEQGPSGASGPAGPRGPPGSAGSPGKDGLNGLP) show a composition bias toward low complexity. Proline 986 carries the post-translational modification 3-hydroxyproline. Position 987 is a 4-hydroxyproline (proline 987). Residues 999-1014 (VGPPGPPGPPGPPGPP) are compositionally biased toward pro residues. At proline 1001 the chain carries 3-hydroxyproline. Residue proline 1002 is modified to 4-hydroxyproline. Proline 1004 bears the 3-hydroxyproline mark. At proline 1005 the chain carries 4-hydroxyproline. Proline 1007 carries the 3-hydroxyproline modification. 4-hydroxyproline occurs at positions 1008, 1011, and 1014.

The protein belongs to the fibrillar collagen family. In terms of assembly, trimers of one alpha 2(I) and two alpha 1(I) chains. In terms of processing, contains mostly 4-hydroxyproline. Proline residues at the third position of the tripeptide repeating unit (G-X-Y) are hydroxylated in some or all of the chains. Contains 3-hydroxyproline at a few sites. This modification occurs on the first proline residue in the sequence motif Gly-Pro-Hyp, where Hyp is 4-hydroxyproline. Post-translationally, lysine residues at the third position of the tripeptide repeating unit (G-X-Y) are 5-hydroxylated in some or all of the chains. In terms of processing, O-glycosylated on hydroxylated lysine residues. The O-linked glycan consists of a Glc-Gal disaccharide. In terms of tissue distribution, expressed in bones.

Its subcellular location is the secreted. It localises to the extracellular space. The protein localises to the extracellular matrix. Functionally, type I collagen is a member of group I collagen (fibrillar forming collagen). The sequence is that of Collagen alpha-1(I) chain from Megatherium americanum (Giant ground sloth).